A 215-amino-acid polypeptide reads, in one-letter code: Protein-methionine-sulfoxide reductase heme-binding subunit MsrQ (215 aa).

Transmembrane regions (helical) follow at residues 17–37, 50–70, 85–105, 121–141, 152–172, and 177–197; these read AAIWSLYVIGLCPGLWYFYLA, FEHLLGIWALRFLCLGLLVTP, ALGLIAFYYVLAHFTVYLVLD, PYIMLGMAGLIILIPLALTSN, WNTLHKLVYLVLIVGVLHFVL, and ITLEPVFYISTMVVLLGYRLV.

Belongs to the MsrQ family. Heterodimer of a catalytic subunit (MsrP) and a heme-binding subunit (MsrQ). FMN is required as a cofactor. Heme b serves as cofactor.

It localises to the cell inner membrane. Functionally, part of the MsrPQ system that repairs oxidized periplasmic proteins containing methionine sulfoxide residues (Met-O), using respiratory chain electrons. Thus protects these proteins from oxidative-stress damage caused by reactive species of oxygen and chlorine generated by the host defense mechanisms. MsrPQ is essential for the maintenance of envelope integrity under bleach stress, rescuing a wide series of structurally unrelated periplasmic proteins from methionine oxidation. MsrQ provides electrons for reduction to the reductase catalytic subunit MsrP, using the quinone pool of the respiratory chain. This chain is Protein-methionine-sulfoxide reductase heme-binding subunit MsrQ, found in Agrobacterium fabrum (strain C58 / ATCC 33970) (Agrobacterium tumefaciens (strain C58)).